A 271-amino-acid polypeptide reads, in one-letter code: Phosphate import ATP-binding protein PstB (271 aa).

The ABC transporter domain maps to 24–266 (MIGKDVSVYY…PDDQRTQDYI (243 aa)). 56 to 63 (GPSGCGKS) serves as a coordination point for ATP.

Belongs to the ABC transporter superfamily. Phosphate importer (TC 3.A.1.7) family. The complex is composed of two ATP-binding proteins (PstB), two transmembrane proteins (PstC and PstA) and a solute-binding protein (PstS).

Its subcellular location is the cell inner membrane. The catalysed reaction is phosphate(out) + ATP + H2O = ADP + 2 phosphate(in) + H(+). Functionally, part of the ABC transporter complex PstSACB involved in phosphate import. Responsible for energy coupling to the transport system. In Agrobacterium fabrum (strain C58 / ATCC 33970) (Agrobacterium tumefaciens (strain C58)), this protein is Phosphate import ATP-binding protein PstB.